The sequence spans 77 residues: MNRTKLVLGAVILGSHSAGCSSNAKIDQLSSDVQTLNAKVDQLSNDVNAMRSDVQAAKDDAARANQRLDNQAHAYKK.

Positions 1–19 (MNRTKLVLGAVILGSHSAG) are cleaved as a signal peptide. C20 carries the N-palmitoyl cysteine lipid modification. The S-diacylglycerol cysteine moiety is linked to residue C20. 2 repeats span residues 23-33 (NAKIDQLSSDV) and 37-47 (NAKVDQLSNDV). Positions 26 to 74 (IDQLSSDVQTLNAKVDQLSNDVNAMRSDVQAAKDDAARANQRLDNQAHA) form a coiled coil. Positions 56 to 77 (AAKDDAARANQRLDNQAHAYKK) are disordered. K77 is subject to N6-murein peptidoglycan lysine.

It belongs to the Lpp family. In terms of assembly, homotrimer.

The protein resides in the cell outer membrane. It is found in the secreted. Its subcellular location is the cell wall. In terms of biological role, a highly abundant outer membrane lipoprotein that controls the distance between the inner and outer membranes. The only protein known to be covalently linked to the peptidoglycan network (PGN). Also non-covalently binds the PGN. The link between the cell outer membrane and PGN contributes to maintenance of the structural and functional integrity of the cell envelope, and maintains the correct distance between the PGN and the outer membrane. The sequence is that of Major outer membrane lipoprotein Lpp from Serratia marcescens.